We begin with the raw amino-acid sequence, 75 residues long: Exodeoxyribonuclease 7 small subunit (75 aa).

The protein belongs to the XseB family. In terms of assembly, heterooligomer composed of large and small subunits.

It localises to the cytoplasm. The catalysed reaction is Exonucleolytic cleavage in either 5'- to 3'- or 3'- to 5'-direction to yield nucleoside 5'-phosphates.. In terms of biological role, bidirectionally degrades single-stranded DNA into large acid-insoluble oligonucleotides, which are then degraded further into small acid-soluble oligonucleotides. This is Exodeoxyribonuclease 7 small subunit from Clostridium perfringens (strain ATCC 13124 / DSM 756 / JCM 1290 / NCIMB 6125 / NCTC 8237 / Type A).